Reading from the N-terminus, the 153-residue chain is Membrane-spanning 4-domains subfamily A member 13 (153 aa).

Transmembrane regions (helical) follow at residues 1 to 21 (MTGI…MGQI), 36 to 56 (GCSL…RATW), 71 to 91 (ILCM…LSTF), and 111 to 131 (VLLS…IFGC).

It belongs to the MS4A family.

The protein localises to the membrane. Functionally, may be involved in signal transduction as a component of a multimeric receptor complex. The sequence is that of Membrane-spanning 4-domains subfamily A member 13 (MS4A13) from Bos taurus (Bovine).